We begin with the raw amino-acid sequence, 137 residues long: Large ribosomal subunit protein uL16 (137 aa).

This sequence belongs to the universal ribosomal protein uL16 family. As to quaternary structure, part of the 50S ribosomal subunit.

In terms of biological role, binds 23S rRNA and is also seen to make contacts with the A and possibly P site tRNAs. This is Large ribosomal subunit protein uL16 from Methylocella silvestris (strain DSM 15510 / CIP 108128 / LMG 27833 / NCIMB 13906 / BL2).